A 491-amino-acid polypeptide reads, in one-letter code: Probable V-type proton ATPase subunit B 1 (491 aa).

Arg380 is an ATP binding site.

The protein belongs to the ATPase alpha/beta chains family. In terms of assembly, V-ATPase is a heteromultimeric enzyme made up of two complexes: the ATP-hydrolytic V1 complex and the proton translocation V0 complex. The V1 complex consists of three catalytic AB heterodimers that form a heterohexamer, three peripheral stalks each consisting of EG heterodimers, one central rotor including subunits D and F, and the regulatory subunits C and H. The proton translocation complex V0 consists of the proton transport subunit a, a ring of proteolipid subunits c9c'', rotary subunit d, subunits e and f, and the accessory subunits vah-19/Ac45 and vah-20/PRR.

Non-catalytic subunit of the V1 complex of vacuolar(H+)-ATPase (V-ATPase), a multisubunit enzyme composed of a peripheral complex (V1) that hydrolyzes ATP and a membrane integral complex (V0) that translocates protons. V-ATPase is responsible for acidifying and maintaining the pH of intracellular compartments and in some cell types, is targeted to the plasma membrane, where it is responsible for acidifying the extracellular environment. Essential for the proper assembly and activity of V-ATPase. Required maternally for early embryogenesis and zygotically during morphogenesis. Specifically, involved in the clearance of apoptotic cell corpses in embryos. Also, during embryonic development, the V-ATPase is required to repress fusion of epidermal cells probably by negatively regulating eff-1-mediated cell fusion. In neurons, required for necrotic cell death by promoting intracellular acidification. Required for cell death induced by hypoxia. Required for acidification of synaptic vesicles and the release of neurotransmitters from adult neurons. This Caenorhabditis briggsae protein is Probable V-type proton ATPase subunit B 1.